Consider the following 123-residue polypeptide: Ribosome-binding factor A (123 aa).

The protein belongs to the RbfA family. Monomer. Binds 30S ribosomal subunits, but not 50S ribosomal subunits or 70S ribosomes.

The protein resides in the cytoplasm. One of several proteins that assist in the late maturation steps of the functional core of the 30S ribosomal subunit. Associates with free 30S ribosomal subunits (but not with 30S subunits that are part of 70S ribosomes or polysomes). Required for efficient processing of 16S rRNA. May interact with the 5'-terminal helix region of 16S rRNA. This is Ribosome-binding factor A from Ralstonia nicotianae (strain ATCC BAA-1114 / GMI1000) (Ralstonia solanacearum).